The primary structure comprises 86 residues: Chymotrypsin inhibitor (86 aa).

A signal peptide spans 1–22 (MKLLFAIVALLALAFLCADISA).

It belongs to the protease inhibitor I13 (potato type I serine protease inhibitor) family. Monomer. Expressed in the body wall, coelomocytes and at a lower level in intestine.

The protein localises to the secreted. Its function is as follows. Inhibits L.terrestris digestive chymotrypsin LT_CH 1 and bovine alpha-chymotrypsin. In Lumbricus terrestris (Common earthworm), this protein is Chymotrypsin inhibitor.